Consider the following 480-residue polypeptide: Glutamate--tRNA ligase (480 aa).

The 'HIGH' region motif lies at Pro21–Gly31. Residues Cys110, Cys112, Cys137, and His139 each coordinate Zn(2+). Residues Lys248–Arg252 carry the 'KMSKS' region motif. Lys251 serves as a coordination point for ATP.

The protein belongs to the class-I aminoacyl-tRNA synthetase family. Glutamate--tRNA ligase type 1 subfamily. As to quaternary structure, monomer. Zn(2+) serves as cofactor.

The protein localises to the cytoplasm. The catalysed reaction is tRNA(Glu) + L-glutamate + ATP = L-glutamyl-tRNA(Glu) + AMP + diphosphate. In terms of biological role, catalyzes the attachment of glutamate to tRNA(Glu) in a two-step reaction: glutamate is first activated by ATP to form Glu-AMP and then transferred to the acceptor end of tRNA(Glu). This is Glutamate--tRNA ligase from Haemophilus influenzae (strain PittEE).